Here is a 132-residue protein sequence, read N- to C-terminus: Monothiol glutaredoxin-S9 (132 aa).

A disordered region spans residues 16–38; the sequence is ASRPATAAAAPPPPPPRGEEEEV. The 97-residue stretch at 35 to 131 folds into the Glutaredoxin domain; sequence EEEVRRAVAE…PILKEAGALW (97 aa). Residue C55 participates in [2Fe-2S] cluster binding. The short motif at 129–132 is the Responsive for interaction with TGA factors element; the sequence is ALWL.

The protein belongs to the glutaredoxin family. CC-type subfamily.

It is found in the cytoplasm. The protein resides in the nucleus. In terms of biological role, may only reduce GSH-thiol disulfides, but not protein disulfides. This Oryza sativa subsp. japonica (Rice) protein is Monothiol glutaredoxin-S9 (GRXS9).